We begin with the raw amino-acid sequence, 326 residues long: uncharacterized protein (326 aa).

It belongs to the ParB family.

This is an uncharacterized protein from Acidianus two-tailed virus (ATV).